The chain runs to 79 residues: Cell division protein ZapB (79 aa).

The stretch at 3-79 forms a coiled coil; it reads LEVFEKLEAK…QALLGRMEEV (77 aa). Residue Lys8 is modified to N6-acetyllysine. The segment at 34–65 is disordered; sequence NNSLSQEVQNAQHQREELERENNHLKEQQNGW. Over residues 35–45 the composition is skewed to polar residues; the sequence is NSLSQEVQNAQ. The span at 46–60 shows a compositional bias: basic and acidic residues; the sequence is HQREELERENNHLKE.

Belongs to the ZapB family. As to quaternary structure, homodimer. The ends of the coiled-coil dimer bind to each other, forming polymers. Interacts with FtsZ.

The protein localises to the cytoplasm. Its function is as follows. Non-essential, abundant cell division factor that is required for proper Z-ring formation. It is recruited early to the divisome by direct interaction with FtsZ, stimulating Z-ring assembly and thereby promoting cell division earlier in the cell cycle. Its recruitment to the Z-ring requires functional FtsA or ZipA. The chain is Cell division protein ZapB from Shigella boydii serotype 18 (strain CDC 3083-94 / BS512).